The primary structure comprises 332 residues: Methionine synthase (332 aa).

His211, Cys213, and Cys296 together coordinate Zn(2+).

The protein belongs to the archaeal MetE family. It depends on Zn(2+) as a cofactor.

It functions in the pathway amino-acid biosynthesis; L-methionine biosynthesis via de novo pathway. Its function is as follows. Catalyzes the transfer of a methyl group to L-homocysteine resulting in methionine formation. The physiological methyl donor is unknown. The protein is Methionine synthase of Saccharolobus islandicus (strain Y.G.57.14 / Yellowstone #1) (Sulfolobus islandicus).